A 673-amino-acid chain; its full sequence is eEF1A lysine and N-terminal methyltransferase homolog (673 aa).

This sequence belongs to the methyltransferase superfamily.

It carries out the reaction L-lysyl-[protein] + S-adenosyl-L-methionine = N(6)-methyl-L-lysyl-[protein] + S-adenosyl-L-homocysteine + H(+). The catalysed reaction is N(6)-methyl-L-lysyl-[protein] + S-adenosyl-L-methionine = N(6),N(6)-dimethyl-L-lysyl-[protein] + S-adenosyl-L-homocysteine + H(+). It catalyses the reaction N-terminal glycyl-L-lysyl-L-glutamyl-[protein] + 3 S-adenosyl-L-methionine = N-terminal N,N,N-trimethyl-glycyl-L-lysyl-L-glutamyl-[protein] + 3 S-adenosyl-L-homocysteine + 3 H(+). Dual methyltransferase. It catalyzes N-terminal methylation of target proteins via its C-terminus. It catalyzes dimethylation on lysine residues of target proteins via its N-terminus. The protein is eEF1A lysine and N-terminal methyltransferase homolog of Drosophila melanogaster (Fruit fly).